The following is a 198-amino-acid chain: FMN-dependent NADH:quinone oxidoreductase (198 aa).

FMN is bound by residues S10, 16-18, 94-97, and 138-141; these read SQS, MYNF, and TRGG.

It belongs to the azoreductase type 1 family. Homodimer. Requires FMN as cofactor.

It catalyses the reaction 2 a quinone + NADH + H(+) = 2 a 1,4-benzosemiquinone + NAD(+). It carries out the reaction N,N-dimethyl-1,4-phenylenediamine + anthranilate + 2 NAD(+) = 2-(4-dimethylaminophenyl)diazenylbenzoate + 2 NADH + 2 H(+). Its function is as follows. Quinone reductase that provides resistance to thiol-specific stress caused by electrophilic quinones. In terms of biological role, also exhibits azoreductase activity. Catalyzes the reductive cleavage of the azo bond in aromatic azo compounds to the corresponding amines. The sequence is that of FMN-dependent NADH:quinone oxidoreductase from Shewanella putrefaciens (strain CN-32 / ATCC BAA-453).